Reading from the N-terminus, the 136-residue chain is Globin-2 (136 aa).

The Globin domain maps to 1–134; it reads VSQADIAAVQ…ILSQMKIALS (134 aa). Histidine 89 contributes to the heme b binding site.

This sequence belongs to the globin family. In terms of assembly, homodimer.

This is Globin-2 from Phreagena soyoae (Deep-sea cold-seep clam).